Reading from the N-terminus, the 111-residue chain is PCNA-associated factor (111 aa).

The residue at position 8 (Ser-8) is a Phosphoserine. Lys-15 is covalently cross-linked (Glycyl lysine isopeptide (Lys-Gly) (interchain with G-Cter in ubiquitin)). The D-box signature appears at 23 to 34; that stretch reads RKVLGSSTSATN. Residues 23 to 111 form a disordered region; that stretch reads RKVLGSSTSA…QPDHTNDEKE (89 aa). Position 24 is an N6-acetyllysine; alternate (Lys-24). Residue Lys-24 forms a Glycyl lysine isopeptide (Lys-Gly) (interchain with G-Cter in ubiquitin); alternate linkage. Phosphoserine occurs at positions 28, 31, and 72. Positions 28–40 are enriched in low complexity; sequence SSTSATNSTSVSS. A PIP-box motif is present at residues 62-72; that stretch reads QKGIGEFFRLS. The segment covering 72–81 has biased composition (basic and acidic residues); sequence SPKDSEKENQ. The short motif at 78 to 80 is the KEN box element; the sequence is KEN. Residues 85 to 97 carry the Initiation motif motif; that stretch reads EAGSSGLGKAKRK.

Interacts (when monoubiquitinated at Lys-15 and Lys-24) with PCNA. Interacts with isoform 2/p33ING1b of ING1. Interacts with BRCA1. Post-translationally, monoubiquitinated at Lys-15 and Lys-24 during normal S phase, promoting its association with PCNA. Also diubiquitinated at these 2 sites. Following DNA damage, monoubiquitin chains at Lys-15 and Lys-24 are probably extended, leading to disrupt the interaction with PCNA. Polyubiquitinated by the APC/C complex at the mitotic exit, leading to its degradation by the proteasome. Expressed predominantly in liver, pancreas and placenta. Not detected in heart or brain. Highly expressed in a number of tumors, especially esophageal tumors, in anaplastic thyroid carcinomas, adrenocortical carcinomas, and in non-small-cell lung cancer lines.

The protein resides in the nucleus. Its subcellular location is the cytoplasm. The protein localises to the perinuclear region. In terms of biological role, PCNA-binding protein that acts as a regulator of DNA repair during DNA replication. Following DNA damage, the interaction with PCNA is disrupted, facilitating the interaction between monoubiquitinated PCNA and the translesion DNA synthesis DNA polymerase eta (POLH) at stalled replisomes, facilitating the bypass of replication-fork-blocking lesions. Also acts as a regulator of centrosome number. In Homo sapiens (Human), this protein is PCNA-associated factor.